The sequence spans 727 residues: MPKNSKVTQREHSNEHVTESVADLLALEEPVDYKQSVLNVAGETGGKQKVAEEELDAEDRPAWNSKLQYILAQIGFSVGLGNIWRFPYLCQKNGGGAYLVPYLVLLIIIGIPLFFLELAVGQRIRRGSIGVWHYVCPRLGGIGFSSCIVCLFVGLYYNVIIGWSVFYFFKSFQYPLPWSECPVIRNGTVAVVEPECEKSSATTYFWYREALDISNSISESGGLNWKMTVCLLVAWSIVGMAVVKGIQSSGKVMYFSSLFPYVVLACFLVRGLLLRGAVDGILHMFTPKLDKMLDPQVWREAATQVFFALGLGFGGVIAFSSYNKQDNNCHFDAALVSFINFFTSVLATLVVFAVLGFKANIMNEKCVVENAEKILGYLNSNVLSRDLIPPHVNFSHLTTKDYSEMYNVIMTVKEKQFSALGLDPCLLEDELDKSVQGTGLAFIAFTEAMTHFPASPFWSVMFFLMLINLGLGSMIGTMAGITTPIIDTFKVPKEMFTVGCCVFAFFVGLLFVQRSGNYFVTMFDDYSATLPLTVIVILENIAVAWIYGTKKFMQELTEMLGFRPYRFYFYMWKFVSPLCMAVLTTASIIQLGVSPPGYSAWIKEEAAERYLYFPNWAMALLITLIAVATLPIPVVFILRHFHLLSDGSNTLSVSYKKGRMMKDISNLEENDETRFILSKVPSEAPSPMPTHRSYLGPGSTSPLESSSHPNGRYGSGYLLASTPESEL.

Over 1 to 68 (MPKNSKVTQR…DRPAWNSKLQ (68 aa)) the chain is Cytoplasmic. A phosphoserine mark is found at Ser13 and Ser20. Residues 69 to 89 (YILAQIGFSVGLGNIWRFPYL) form a helical membrane-spanning segment. At 90–96 (CQKNGGG) the chain is on the extracellular side. The helical transmembrane segment at 97 to 116 (AYLVPYLVLLIIIGIPLFFL) threads the bilayer. The Cytoplasmic segment spans residues 117-140 (ELAVGQRIRRGSIGVWHYVCPRLG). The chain crosses the membrane as a helical span at residues 141 to 161 (GIGFSSCIVCLFVGLYYNVII). Residues 162–224 (GWSVFYFFKS…NSISESGGLN (63 aa)) lie on the Extracellular side of the membrane. A glycan (N-linked (GlcNAc...) asparagine) is linked at Asn186. Residues 225-243 (WKMTVCLLVAWSIVGMAVV) traverse the membrane as a helical segment. Residues 244 to 251 (KGIQSSGK) lie on the Cytoplasmic side of the membrane. Residues 252–269 (VMYFSSLFPYVVLACFLV) traverse the membrane as a helical segment. At 270 to 304 (RGLLLRGAVDGILHMFTPKLDKMLDPQVWREAATQ) the chain is on the extracellular side. A helical transmembrane segment spans residues 305–322 (VFFALGLGFGGVIAFSSY). Residues 323–333 (NKQDNNCHFDA) are Cytoplasmic-facing. Residues 334–355 (ALVSFINFFTSVLATLVVFAVL) traverse the membrane as a helical segment. Residues 356–451 (GFKANIMNEK…FIAFTEAMTH (96 aa)) are Extracellular-facing. Tyr377 is modified (phosphotyrosine). The N-linked (GlcNAc...) asparagine glycan is linked to Asn393. A helical membrane pass occupies residues 452–471 (FPASPFWSVMFFLMLINLGL). The Cytoplasmic segment spans residues 472–494 (GSMIGTMAGITTPIIDTFKVPKE). A helical transmembrane segment spans residues 495 to 513 (MFTVGCCVFAFFVGLLFVQ). Residues 514–528 (RSGNYFVTMFDDYSA) are Extracellular-facing. The helical transmembrane segment at 529-549 (TLPLTVIVILENIAVAWIYGT) threads the bilayer. Topologically, residues 550-569 (KKFMQELTEMLGFRPYRFYF) are cytoplasmic. The chain crosses the membrane as a helical span at residues 570–591 (YMWKFVSPLCMAVLTTASIIQL). At 592 to 618 (GVSPPGYSAWIKEEAAERYLYFPNWAM) the chain is on the extracellular side. The helical transmembrane segment at 619-641 (ALLITLIAVATLPIPVVFILRHF) threads the bilayer. Residues 642-727 (HLLSDGSNTL…LLASTPESEL (86 aa)) are Cytoplasmic-facing. Phosphoserine is present on residues Ser665 and Ser701. The segment at 680–727 (VPSEAPSPMPTHRSYLGPGSTSPLESSSHPNGRYGSGYLLASTPESEL) is disordered. A compositionally biased stretch (polar residues) spans 698 to 709 (GSTSPLESSSHP).

The protein belongs to the sodium:neurotransmitter symporter (SNF) (TC 2.A.22) family. As to expression, found exclusively in the central nervous system and is more abundant in the cerebellum and the cerebral cortex. Expressed in PC-12 cell line.

The protein localises to the cytoplasmic vesicle. The protein resides in the secretory vesicle. It localises to the synaptic vesicle membrane. It is found in the postsynapse. Its subcellular location is the presynapse. The catalysed reaction is L-proline(in) + Na(+)(in) = L-proline(out) + Na(+)(out). The enzyme catalyses L-leucine(in) + Na(+)(in) = L-leucine(out) + Na(+)(out). It catalyses the reaction glycine(in) + Na(+)(in) = glycine(out) + Na(+)(out). It carries out the reaction L-alanine(in) + Na(+)(in) = L-alanine(out) + Na(+)(out). The catalysed reaction is L-glutamine(in) + Na(+)(in) = L-glutamine(out) + Na(+)(out). Functionally, synaptic vesicle transporter with apparent selectivity for neutral amino acids. The transport is sodium-coupled but chloride-independent, likely driven by the proton electrochemical gradient generated by vacuolar H(+)-ATPase in an overall electrogenic mechanism. May contribute to the synaptic uptake of neurotransmitter precursors in a process coupled in part to vesicle exocytosis. The chain is Sodium-dependent neutral amino acid transporter SLC6A17 from Rattus norvegicus (Rat).